We begin with the raw amino-acid sequence, 161 residues long: ATP synthase subunit b 1 (161 aa).

A helical membrane pass occupies residues 6–26; it reads EFYVALGFVIFVAILLYYGVH.

This sequence belongs to the ATPase B chain family. In terms of assembly, F-type ATPases have 2 components, F(1) - the catalytic core - and F(0) - the membrane proton channel. F(1) has five subunits: alpha(3), beta(3), gamma(1), delta(1), epsilon(1). F(0) has three main subunits: a(1), b(2) and c(10-14). The alpha and beta chains form an alternating ring which encloses part of the gamma chain. F(1) is attached to F(0) by a central stalk formed by the gamma and epsilon chains, while a peripheral stalk is formed by the delta and b chains.

It localises to the cell inner membrane. In terms of biological role, f(1)F(0) ATP synthase produces ATP from ADP in the presence of a proton or sodium gradient. F-type ATPases consist of two structural domains, F(1) containing the extramembraneous catalytic core and F(0) containing the membrane proton channel, linked together by a central stalk and a peripheral stalk. During catalysis, ATP synthesis in the catalytic domain of F(1) is coupled via a rotary mechanism of the central stalk subunits to proton translocation. Its function is as follows. Component of the F(0) channel, it forms part of the peripheral stalk, linking F(1) to F(0). This is ATP synthase subunit b 1 from Beijerinckia indica subsp. indica (strain ATCC 9039 / DSM 1715 / NCIMB 8712).